The chain runs to 415 residues: Serine hydroxymethyltransferase (415 aa).

Residues leucine 119 and 123 to 125 contribute to the (6S)-5,6,7,8-tetrahydrofolate site; that span reads GHL. Lysine 228 is modified (N6-(pyridoxal phosphate)lysine). 353–355 is a (6S)-5,6,7,8-tetrahydrofolate binding site; sequence SAF.

Belongs to the SHMT family. Homodimer. The cofactor is pyridoxal 5'-phosphate.

The protein resides in the cytoplasm. It carries out the reaction (6R)-5,10-methylene-5,6,7,8-tetrahydrofolate + glycine + H2O = (6S)-5,6,7,8-tetrahydrofolate + L-serine. Its pathway is one-carbon metabolism; tetrahydrofolate interconversion. It functions in the pathway amino-acid biosynthesis; glycine biosynthesis; glycine from L-serine: step 1/1. Functionally, catalyzes the reversible interconversion of serine and glycine with tetrahydrofolate (THF) serving as the one-carbon carrier. Also exhibits THF-independent aldolase activity toward beta-hydroxyamino acids, producing glycine and aldehydes, via a retro-aldol mechanism. The protein is Serine hydroxymethyltransferase of Halobacterium salinarum (strain ATCC 29341 / DSM 671 / R1).